The following is a 1121-amino-acid chain: Brassinosteroid LRR receptor kinase BRI1 (1121 aa).

A signal peptide spans 1–24 (MDSLWAAIAALFVAAAVVVRGAAA). The Cys pair 1 signature appears at 54-61 (CRFPGAGC). 17 LRR repeats span residues 90–114 (LGSVEVLSLRGANVSGALSAAGGAR), 116–142 (GSKLQALDLSGNAALRGSVADVAALAS), 144–167 (CGGLKTLNLSGDAVGAAKVGGGGG), 170–193 (FAGLDSLDLSNNKITDDSDLRWMV), 197–221 (VGAVRWLDLALNRISGVPEFTNCSG), 223–243 (QYLDLSGNLIVGEVPGGALSD), 244–268 (CRGLKVLNLSFNHLAGVFPPDIAGL), 269–292 (TSLNALNLSNNNFSGELPGEAFAK), 294–317 (QQLTALSLSFNHFNGSIPDTVASL), 318–341 (PELQQLDLSSNTFSGTIPSSLCQD), 343–367 (NSKLHLLYLQNNYLTGGIPDAVSNC), 369–391 (SLVSLDLSLNYINGSIPASLGDL), 392–415 (GNLQDLILWQNELEGEIPASLSRI), 416–439 (QGLEHLILDYNGLTGSIPPELAKC), 441–463 (KLNWISLASNRLSGPIPSWLGKL), 464–487 (SYLAILKLSNNSFSGPIPPELGDC), and 489–511 (SLVWLDLNSNQLNGSIPKELAKQ). Asn-102 carries N-linked (GlcNAc...) asparagine glycosylation. Asn-151 carries N-linked (GlcNAc...) asparagine glycosylation. The N-linked (GlcNAc...) asparagine glycan is linked to Asn-218. Asn-251, Asn-275, Asn-280, and Asn-307 each carry an N-linked (GlcNAc...) asparagine glycan. 2 N-linked (GlcNAc...) asparagine glycosylation sites follow: Asn-366 and Asn-381. N-linked (GlcNAc...) asparagine glycosylation is found at Asn-473 and Asn-501. Tyr-525 provides a ligand contact to brassinolide. The stretch at 541–564 (GSLLEFTSIRPDDLSRMPSKKLCN) is one LRR 18 repeat. The N-linked (GlcNAc...) asparagine glycan is linked to Asn-564. Position 569 (Tyr-569) interacts with brassinolide. A glycan (N-linked (GlcNAc...) asparagine) is linked at Asn-580. LRR repeat units follow at residues 580–603 (NGSMIFLDLSYNQLDSAIPGELGD), 604–628 (MFYLMIMNLGHNLLSGTIPSRLAEA), 629–651 (KKLAVLDLSYNQLEGPIPNSFSA), and 652–676 (LSLSEINLSNNQLNGTIPELGSLAT). 3 N-linked (GlcNAc...) asparagine glycosylation sites follow: Asn-658, Asn-665, and Asn-684. The short motif at 689–696 (CGFPLPPC) is the Cys pair 2 element. The interval 693–712 (LPPCDHSSPRSSNDHQSHRR) is disordered. Residues 719-739 (SIAMGLLFSLFCIIVIIIAIG) traverse the membrane as a helical segment. The 277-residue stretch at 807 to 1083 (FHIACQIGSG…LKVMAMFKEI (277 aa)) folds into the Protein kinase domain. ATP contacts are provided by residues 813-821 (IGSGGFGDV), Lys-835, 881-883 (DYM), 887-890 (SLED), 933-938 (DMKSSN), and Asp-951. Residue Asp-933 is the Proton acceptor of the active site.

The protein belongs to the protein kinase superfamily. Ser/Thr protein kinase family. Interacts with BIP103 and BIP131. Interacts with BAK1. Interacts with BSK3. Interacts with SERK2. Highly expressed in shoots. Expressed at low levels in roots.

Its subcellular location is the cell membrane. It catalyses the reaction L-seryl-[protein] + ATP = O-phospho-L-seryl-[protein] + ADP + H(+). It carries out the reaction L-threonyl-[protein] + ATP = O-phospho-L-threonyl-[protein] + ADP + H(+). In terms of biological role, receptor kinase involved brassinosteroid (BR) signal transduction. Regulates, in response to BR binding, a signaling cascade involved in plant development, promotion of cell elongation and flowering. Activates BR signaling by targeting and phosphorylating BSK3, a positive regulator of BR signaling. Forms at the plasma membrane a receptor complex with BAK1 which is activated in response to brassinolide. Phosphorylates BAK1. Phosphorylates REM4.1, which reduces REM4.1 binding affinity to BAK1 and allows the formation and subsequent activation of the BRI1-BAK1 receptor complex. Functions in various growth and developmental processes, such as internode elongation, bending of the lamina joint and skotomorphogenesis. Functions in internode elongation by inducing the formation of the intercalary meristem and the longitudinal elongation of internode cells. Involved in organ development through the control of cell division and elongation. Does not seem essential for organ pattern formation or organ initiation. This is Brassinosteroid LRR receptor kinase BRI1 from Oryza sativa subsp. japonica (Rice).